A 203-amino-acid chain; its full sequence is Glycerol-3-phosphate acyltransferase (203 aa).

5 helical membrane-spanning segments follow: residues 10–30 (LLAL…GLLI), 59–79 (PAAA…VILA), 87–107 (AAQI…YLKF), 116–136 (FFGT…AIWL), and 168–188 (LVVL…ENII).

It belongs to the PlsY family. As to quaternary structure, probably interacts with PlsX.

It localises to the cell inner membrane. The enzyme catalyses an acyl phosphate + sn-glycerol 3-phosphate = a 1-acyl-sn-glycero-3-phosphate + phosphate. The protein operates within lipid metabolism; phospholipid metabolism. Catalyzes the transfer of an acyl group from acyl-phosphate (acyl-PO(4)) to glycerol-3-phosphate (G3P) to form lysophosphatidic acid (LPA). This enzyme utilizes acyl-phosphate as fatty acyl donor, but not acyl-CoA or acyl-ACP. This Dinoroseobacter shibae (strain DSM 16493 / NCIMB 14021 / DFL 12) protein is Glycerol-3-phosphate acyltransferase.